A 370-amino-acid polypeptide reads, in one-letter code: Cathepsin B-like cysteine proteinase 3 (370 aa).

Residues 1-16 (MLKVYFLALFLAGCSA) form the signal peptide. Positions 17–91 (FVLDEIRGIN…FVRGEIVPEP (75 aa)) are excised as a propeptide. Intrachain disulfides connect cysteine 105-cysteine 134, cysteine 117-cysteine 162, cysteine 153-cysteine 210, cysteine 154-cysteine 158, cysteine 190-cysteine 214, and cysteine 198-cysteine 202. Cysteine 120 is a catalytic residue. A glycan (N-linked (GlcNAc...) asparagine) is linked at asparagine 138. Active-site residues include histidine 284 and asparagine 304.

Belongs to the peptidase C1 family.

The sequence is that of Cathepsin B-like cysteine proteinase 3 (cpr-3) from Caenorhabditis elegans.